Here is a 194-residue protein sequence, read N- to C-terminus: MNLMTMITGVVLAGGKARRMGGVDKGLLELNGKPLWQYVADALMTQLSHVVVNANRHQEIYQVSGLKVIEDSLADYPGPLAGMLSVMQQEAGEWFLFCPCDTPYIPHDLAARLTHQRKDAPVVWVHDGERDHPTIALVNRAIEPLLLEYLQAGERRVMAFMRLAGGHAVDFSDRKEAFINVNTPEELARWQEKR.

GTP contacts are provided by residues 12–14, Lys-25, Asn-53, Asp-71, and Asp-101; that span reads LAG. Residue Asp-101 coordinates Mg(2+).

This sequence belongs to the MobA family. As to quaternary structure, monomer. Requires Mg(2+) as cofactor.

The protein localises to the cytoplasm. The catalysed reaction is Mo-molybdopterin + GTP + H(+) = Mo-molybdopterin guanine dinucleotide + diphosphate. Its function is as follows. Transfers a GMP moiety from GTP to Mo-molybdopterin (Mo-MPT) cofactor (Moco or molybdenum cofactor) to form Mo-molybdopterin guanine dinucleotide (Mo-MGD) cofactor. The protein is Molybdenum cofactor guanylyltransferase of Escherichia coli O6:H1 (strain CFT073 / ATCC 700928 / UPEC).